The primary structure comprises 280 residues: Aquaporin PIP2-7 (280 aa).

Met-1 carries the post-translational modification N-acetylmethionine. Over 1–38 the chain is Cytoplasmic; that stretch reads MSKEVSEEGKTHHGKDYVDPPPAPLLDMGELKSWSFYR. Residue Lys-3 is modified to N6,N6-dimethyllysine. The chain crosses the membrane as a helical span at residues 39 to 59; sequence ALIAEFIATLLFLYVTVATVI. Residues 60–69 lie on the Extracellular side of the membrane; the sequence is GHKKQTGPCD. A helical transmembrane segment spans residues 70-90; the sequence is GVGLLGIAWAFGGMIFVLVYC. The Cytoplasmic portion of the chain corresponds to 91 to 118; the sequence is TAGISGGHINPAVTFGLFLARKVSLVRA. The NPA 1 signature appears at 100–102; that stretch reads NPA. Residues 119–139 form a helical membrane-spanning segment; sequence LGYMIAQCLGAICGVGFVKAF. Residues 140–160 lie on the Extracellular side of the membrane; it reads MKTPYNTLGGGANTVADGYSK. The helical transmembrane segment at 161–181 threads the bilayer; it reads GTALGAEIIGTFVLVYTVFSA. Residues 182 to 192 lie on the Cytoplasmic side of the membrane; the sequence is TDPKRSARDSH. Residues 193-213 form a helical membrane-spanning segment; it reads IPVLAPLPIGFAVFMVHLATI. Over 214–242 the chain is Extracellular; the sequence is PITGTGINPARSFGAAVIYNNEKAWDDQW. Positions 221 to 223 match the NPA 2 motif; the sequence is NPA. A helical transmembrane segment spans residues 243–263; that stretch reads IFWVGPFLGALAAAAYHQYIL. Topologically, residues 264–280 are cytoplasmic; that stretch reads RASAIKALGSFRSNATN. Ser-273 and Ser-276 each carry phosphoserine. The residue at position 279 (Thr-279) is a Phosphothreonine.

This sequence belongs to the MIP/aquaporin (TC 1.A.8) family. PIP (TC 1.A.8.11) subfamily. As to quaternary structure, interacts with SYP61 and SYP121 in trafficking vesicles and at the plasma membrane. In terms of tissue distribution, highly expressed in flowers, expressed at low levels in siliques, and at low level in leaves and roots. Highly levels in elongating cells in both roots and shoots.

The protein localises to the cell membrane. Functionally, water channel required to facilitate the transport of water across cell membrane. May be involved in the osmoregulation in plants under high osmotic stress such as under a high salt condition. The sequence is that of Aquaporin PIP2-7 from Arabidopsis thaliana (Mouse-ear cress).